The chain runs to 303 residues: Ubiquinone biosynthesis protein COQ4, mitochondrial (303 aa).

4 residues coordinate Zn(2+): H191, D192, H195, and E207.

Belongs to the COQ4 family. In terms of assembly, component of a multi-subunit COQ enzyme complex, composed of at least COQ3, COQ4, COQ5, COQ6, COQ7 and COQ9. The cofactor is Zn(2+).

Its subcellular location is the mitochondrion inner membrane. It catalyses the reaction a 4-hydroxy-3-methoxy-5-(all-trans-polyprenyl)benzoate + H(+) = a 2-methoxy-6-(all-trans-polyprenyl)phenol + CO2. It functions in the pathway cofactor biosynthesis; ubiquinone biosynthesis. In terms of biological role, lyase that catalyzes the C1-decarboxylation of 4-hydroxy-3-methoxy-5-(all-trans-polyprenyl)benzoic acid into 2-methoxy-6-(all-trans-polyprenyl)phenol during ubiquinone biosynthesis. The polypeptide is Ubiquinone biosynthesis protein COQ4, mitochondrial (Komagataella phaffii (strain GS115 / ATCC 20864) (Yeast)).